We begin with the raw amino-acid sequence, 712 residues long: MFDTHTVEIEWAGRPLKLETGKIARQADGAVLATYGETVVLATVVSAKAPKAGQDFFPLTVNYQEKTYAAGKIPGGYFKREGRPSEKETLVSRLIDRPIRPLFPEGYKNDTQVVVTVIQHDLENDPDVLSMVATSAALTLSGVPFMGPVGGARVGYINGEYVLNPHLDEMDESSLDLVVAGTYDAVLMVESEAKELNEDVMLGAVMFGHKGFQPVLDAIIKLAEVAAKEPRDFQPADYSALESEMLGLAEGELRNAYKITQKADRYAAVDAVKAKVKAHFLPEEGEAKYTAEEVGAIFKHLQAKIVRWNILDTKSRIDGRNLETVRPIVSEVGLLPRTHGSALFTRGETQAIVVATLGTGEDEQYVDSLTGMYKERFLLHYNFPPYSVGETGRMGSPGRREIGHGKLAWRAIRPMLPTPEQFPYTLRVVSEITESNGSSSMATVCGTSLALMDAGVPLAKPVAGIAMGLILEGDRFAVLSDILGDEDHLGDMDFKVAGTADGITSLQMDIKITGITEEIMKVALGQAQGGRVHILGEMSKAITESRGQLGEFAPRIEVMNIPVDKIREVIGSGGKVIREIVEKTGAKINIEDDGTVKIASSSGKEIEAARKWIHSIVAEPEIGQVYEGTVVKTADFGAFVNFFGARDGLVHISQLASERVAKTQDVVKEGDKVWVKLLGFDERGKVRLSMKVVDQATGQEIPNEKKKEEAAE.

Mg(2+) is bound by residues Asp-487 and Asp-493. In terms of domain architecture, KH spans Pro-554–Ile-613. The region spanning Gly-623–Lys-691 is the S1 motif domain.

Belongs to the polyribonucleotide nucleotidyltransferase family. Requires Mg(2+) as cofactor.

It localises to the cytoplasm. The enzyme catalyses RNA(n+1) + phosphate = RNA(n) + a ribonucleoside 5'-diphosphate. Functionally, involved in mRNA degradation. Catalyzes the phosphorolysis of single-stranded polyribonucleotides processively in the 3'- to 5'-direction. The sequence is that of Polyribonucleotide nucleotidyltransferase from Rhizobium johnstonii (strain DSM 114642 / LMG 32736 / 3841) (Rhizobium leguminosarum bv. viciae).